Consider the following 604-residue polypeptide: MDREFIRNFSIIAHIDHGKSTLADRLLEVTGALSQREMMEQVLDSMDLERERGITIKAHAVRLNYRADDGKLYQLNLIDTPGHVDFSYEVSRSLQACEGALLVVDASQGVEAQTLANTYLALHHNLEIIPVINKIDLPAAEPERIREQIETVVGIDARDAVLCSAKQGVGIHDILEAIVHLVPPPKGSPDAPLRALIFDSWFDSYRGVIILMRIIDGRMKLGQKIKLMANGQVFEVEGLGYQAPKATACSELQAGEVGFLYANIKTVGDAKIGDTITEVENPATEPLPGFEEIKPMVFAGLYPVESHEHGLLRDALEKLRLNDSAFNFEPENSAALGFGFRCGFLGLLHLEIVQERLEREFNIDLITTAPGVRYRITDTSGNLVEVDNPTKFPDPSYIETIEEPIIDASVITREDFLGGILALLEEKRGTQKKFEHIGAGRVMLTYELPLNEIVLDFYDRLKSASKGYASLDYHLSGYRESPMVKLDVLVAGEPVDALSIIVHKDFAFERGKALISRLRKLIPKQMFEVALQAAIGNKIVARETISAMRKNVIAKCYGGDISRKRKLLEKQKEGKKRMKRVGRVEIPQEAFLSVLKVSQSSDDD.

Residues 4 to 186 enclose the tr-type G domain; it reads EFIRNFSIIA…AIVHLVPPPK (183 aa). GTP is bound by residues 16 to 21 and 133 to 136; these read DHGKST and NKID.

Belongs to the TRAFAC class translation factor GTPase superfamily. Classic translation factor GTPase family. LepA subfamily.

It is found in the cell inner membrane. The catalysed reaction is GTP + H2O = GDP + phosphate + H(+). Its function is as follows. Required for accurate and efficient protein synthesis under certain stress conditions. May act as a fidelity factor of the translation reaction, by catalyzing a one-codon backward translocation of tRNAs on improperly translocated ribosomes. Back-translocation proceeds from a post-translocation (POST) complex to a pre-translocation (PRE) complex, thus giving elongation factor G a second chance to translocate the tRNAs correctly. Binds to ribosomes in a GTP-dependent manner. The sequence is that of Elongation factor 4 from Solibacter usitatus (strain Ellin6076).